Here is a 473-residue protein sequence, read N- to C-terminus: MKTLYSLRRFYPVETLFNGTLSLGGRDQETTGFAWWAGNARLINLSGKLLGAHVAHAGLIVFWAGAMNLFEVAHFVPEKPMYEQGLILLPHLATLGWGVGPGGEVIDTFPYFVSGVLHLISSAVLGFGGIYHALIGPETLEESFPFFGYVWKDKNKMTTILGIHLILLGAGAFLLVFKALYFGGVYDTWAPGGGDVRKITNLTLSPSVIFGYLLRSPFGGEGWIVGVDNLEDIIGGHVWLGSICIFGGIWHILTKPFAWARRAFIWSGEAYLSYSQGALSIFGFTACCFVWFNNTAYPSEFYGPTGPEASQAQAFTFLVRDQRLGANIGSAQGPTGLGKYLMRSPTGEIIFGGETMRFWDLRAPWLEPLRGPNGLDLSKLKKDIQPWQERRSAEYMTHAPLGSLNSVGGVATEINAVNYVSPRSWLSTSHFVLGFFFFVGHLWHAGRARAAAAGFEKGIDRDTEPVLSMTPLN.

The propeptide occupies 1-14 (MKTLYSLRRFYPVE). Threonine 15 carries the N-acetylthreonine modification. Residue threonine 15 is modified to Phosphothreonine. 5 helical membrane passes run 69–93 (LFEVAHFVPEKPMYEQGLILLPHLA), 134–155 (LIGPETLEESFPFFGYVWKDKN), 178–200 (KALYFGGVYDTWAPGGGDVRKIT), 255–275 (KPFAWARRAFIWSGEAYLSYS), and 291–312 (WFNNTAYPSEFYGPTGPEASQA). Glutamate 367 lines the [CaMn4O5] cluster pocket. A helical transmembrane segment spans residues 447 to 471 (RARAAAAGFEKGIDRDTEPVLSMTP).

This sequence belongs to the PsbB/PsbC family. PsbC subfamily. In terms of assembly, PSII is composed of 1 copy each of membrane proteins PsbA, PsbB, PsbC, PsbD, PsbE, PsbF, PsbH, PsbI, PsbJ, PsbK, PsbL, PsbM, PsbT, PsbX, PsbY, PsbZ, Psb30/Ycf12, at least 3 peripheral proteins of the oxygen-evolving complex and a large number of cofactors. It forms dimeric complexes. Binds multiple chlorophylls and provides some of the ligands for the Ca-4Mn-5O cluster of the oxygen-evolving complex. It may also provide a ligand for a Cl- that is required for oxygen evolution. PSII binds additional chlorophylls, carotenoids and specific lipids. is required as a cofactor.

The protein localises to the plastid. Its subcellular location is the chloroplast thylakoid membrane. In terms of biological role, one of the components of the core complex of photosystem II (PSII). It binds chlorophyll and helps catalyze the primary light-induced photochemical processes of PSII. PSII is a light-driven water:plastoquinone oxidoreductase, using light energy to abstract electrons from H(2)O, generating O(2) and a proton gradient subsequently used for ATP formation. The chain is Photosystem II CP43 reaction center protein from Angiopteris evecta (Mule's foot fern).